The sequence spans 61 residues: Large ribosomal subunit protein bL32 (61 aa).

The interval 1-44 (MAVQQNRKSRSRRDMRRSHDALTENALTVDQATGETHRRHHVTK) is disordered. Positions 7–16 (RKSRSRRDMR) are enriched in basic residues. Positions 25–34 (NALTVDQATG) are enriched in polar residues.

The protein belongs to the bacterial ribosomal protein bL32 family.

In Acinetobacter baumannii (strain AB307-0294), this protein is Large ribosomal subunit protein bL32.